The chain runs to 270 residues: Checkpoint signal transducer rad25 (270 aa).

2 positions are modified to phosphoserine: Ser234 and Ser253. Residues Gln240–Ala270 are disordered. Residues Glu254 to Ala270 are compositionally biased toward basic and acidic residues.

This sequence belongs to the 14-3-3 family. As to quaternary structure, interacts with rad24. Interacts with byr2.

It localises to the cytoplasm. Its function is as follows. Acts in cell cycle and stress checkpoint signaling by sequestering signal transducers regulated by the checkpoints. Required for the DNA damage checkpoint that ensures that DNA damage is repaired before mitosis is attempted. Sequesters byr2 in the cytoplasm to prevent its translocation to the plasma membrane. This Schizosaccharomyces pombe (strain 972 / ATCC 24843) (Fission yeast) protein is Checkpoint signal transducer rad25.